The following is a 450-amino-acid chain: tRNA modification GTPase MnmE (450 aa).

Positions 25, 86, and 126 each coordinate (6S)-5-formyl-5,6,7,8-tetrahydrofolate. Residues 221–373 (GLRVALVGRP…LVQALLERCG (153 aa)) enclose the TrmE-type G domain. Asn-231 lines the K(+) pocket. GTP is bound by residues 231–236 (NVGKSS), 250–256 (TDLPGTT), 275–278 (DTAG), and 336–339 (NKAD). Position 235 (Ser-235) interacts with Mg(2+). Thr-250, Leu-252, and Thr-255 together coordinate K(+). Thr-256 contacts Mg(2+). Lys-450 is a binding site for (6S)-5-formyl-5,6,7,8-tetrahydrofolate.

Belongs to the TRAFAC class TrmE-Era-EngA-EngB-Septin-like GTPase superfamily. TrmE GTPase family. Homodimer. Heterotetramer of two MnmE and two MnmG subunits. K(+) serves as cofactor.

The protein resides in the cytoplasm. In terms of biological role, exhibits a very high intrinsic GTPase hydrolysis rate. Involved in the addition of a carboxymethylaminomethyl (cmnm) group at the wobble position (U34) of certain tRNAs, forming tRNA-cmnm(5)s(2)U34. This is tRNA modification GTPase MnmE from Synechococcus sp. (strain CC9605).